The primary structure comprises 171 residues: AN1-type zinc finger protein 2A (171 aa).

AN1-type zinc fingers lie at residues 4–52 (PDLG…KKDV) and 94–142 (KVFT…SSAS). 16 residues coordinate Zn(2+): C10, C15, C25, C28, C33, H36, H42, C44, C100, C105, C115, C118, C123, H126, H132, and C134. A disordered region spans residues 134–171 (CQAGSSSASRGRTSTSRAAEQKPSGVSWLAQRLRRTVK). Low complexity predominate over residues 136-151 (AGSSSASRGRTSTSRA).

The protein resides in the cytoplasm. It localises to the nucleus. In Mus musculus (Mouse), this protein is AN1-type zinc finger protein 2A (Zfand2a).